We begin with the raw amino-acid sequence, 620 residues long: Chaperone protein HscA homolog (620 aa).

Belongs to the heat shock protein 70 family.

Chaperone involved in the maturation of iron-sulfur cluster-containing proteins. Has a low intrinsic ATPase activity which is markedly stimulated by HscB. The sequence is that of Chaperone protein HscA homolog from Shewanella putrefaciens (strain CN-32 / ATCC BAA-453).